The following is a 70-amino-acid chain: U2-agatoxin-Ao1q (70 aa).

The signal sequence occupies residues 1–20 (MRSIISLLLISAMVFSMIAA). The propeptide occupies 21 to 34 (VPEEEGLQLSEDER). Intrachain disulfides connect Cys44–Cys58 and Cys52–Cys68. The residue at position 69 (Leu69) is a Leucine amide.

This sequence belongs to the neurotoxin 01 (U2-agtx) family. Does not contain a cysteine at position 53 which disrupts the cysteine framework. In terms of tissue distribution, expressed by the venom gland.

It is found in the secreted. Its function is as follows. Insect active toxin causing rapid but reversible paralysis in crickets. No activity shown in mammals. Does not show effect on mammalian voltage-gated calcium channels. This chain is U2-agatoxin-Ao1q, found in Agelena orientalis (Funnel-web spider).